The chain runs to 675 residues: Pesticidal crystal protein Cry25Aa (675 aa).

This sequence belongs to the delta endotoxin family.

Promotes colloidosmotic lysis by binding to the midgut epithelial cells of insects. This Bacillus thuringiensis subsp. jegathesan protein is Pesticidal crystal protein Cry25Aa (cry25Aa).